Consider the following 127-residue polypeptide: Large ribosomal subunit protein bL12 (127 aa).

The protein belongs to the bacterial ribosomal protein bL12 family. As to quaternary structure, homodimer. Part of the ribosomal stalk of the 50S ribosomal subunit. Forms a multimeric L10(L12)X complex, where L10 forms an elongated spine to which 2 to 4 L12 dimers bind in a sequential fashion. Binds GTP-bound translation factors.

Functionally, forms part of the ribosomal stalk which helps the ribosome interact with GTP-bound translation factors. Is thus essential for accurate translation. This Leptospira interrogans serogroup Icterohaemorrhagiae serovar copenhageni (strain Fiocruz L1-130) protein is Large ribosomal subunit protein bL12.